The primary structure comprises 1107 residues: MDGKRRPGPGPGVPPKRARGGLWDDDDAPRPSQFEEDLALMEEMEAEHRLQEQEEEELQSVLEGVADGQVPPSAIDPRWLRPTPPALDPQTEPLIFQQLEIDHYVGPAQPVPGGPPPSRGSVPVLRAFGVTDEGFSVCCHIHGFAPYFYTPAPPGFGPEHMGDLQRELNLAISRDSRGGRELTGPAVLAVELCSRESMFGYHGHGPSPFLRITVALPRLVAPARRLLEQGIRVAGLGTPSFAPYEANVDFEIRFMVDTDIVGCNWLELPAGKYALRLKEKATQCQLEADVLWSDVVSHPPEGPWQRIAPLRVLSFDIECAGRKGIFPEPERDPVIQICSLGLRWGEPEPFLRLALTLRPCAPILGAKVQSYEKEEDLLQAWSTFIRIMDPDVITGYNIQNFDLPYLISRAQTLKVQTFPFLGRVAGLCSNIRDSSFQSKQTGRRDTKVVSMVGRVQMDMLQVLLREYKLRSYTLNAVSFHFLGEQKEDVQHSIITDLQNGNDQTRRRLAVYCLKDAYLPLRLLERLMVLVNAVEMARVTGVPLSYLLSRGQQVKVVSQLLRQAMHEGLLMPVVKSEGGEDYTGATVIEPLKGYYDVPIATLDFSSLYPSIMMAHNLCYTTLLRPGTAQKLGLTEDQFIRTPTGDEFVKTSVRKGLLPQILENLLSARKRAKAELAKETDPLRRQVLDGRQLALKVSANSVYGFTGAQVGKLPCLEISQSVTGFGRQMIEKTKQLVESKYTVENGYSTSAKVVYGDTDSVMCRFGVSSVAEAMALGREAADWVSGHFPSPIRLEFEKVYFPYLLISKKRYAGLLFSSRPDAHDRMDCKGLEAVRRDNCPLVANLVTASLRRLLIDRDPEGAVAHAQDVISDLLCNRIDISQLVITKELTRAASDYAGKQAHVELAERMRKRDPGSAPSLGDRVPYVIISAAKGVAAYMKSEDPLFVLEHSLPIDTQYYLEQQLAKPLLRIFEPILGEGRAEAVLLRGDHTRCKTVLTGKVGGLLAFAKRRNCCIGCRTVLSHQGAVCEFCQPRESELYQKEVSHLNALEERFSRLWTQCQRCQGSLHEDVICTSRDCPIFYMRKKVRKDLEDQEQLLRRFGPPGPEAW.

The segment at 1-34 (MDGKRRPGPGPGVPPKRARGGLWDDDDAPRPSQF) is disordered. The short motif at 4–19 (KRRPGPGPGVPPKRAR) is the Nuclear localization signal element. An Omega-N-methylarginine modification is found at arginine 19. Lysine 574 is covalently cross-linked (Glycyl lysine isopeptide (Lys-Gly) (interchain with G-Cter in SUMO2)). 4 residues coordinate Zn(2+): cysteine 1012, cysteine 1015, cysteine 1026, and cysteine 1029. The CysA-type zinc-finger motif lies at 1012–1029 (CIGCRTVLSHQGAVCEFC). The [4Fe-4S] cluster site is built by cysteine 1058, cysteine 1061, cysteine 1071, and cysteine 1076. The CysB motif motif lies at 1058–1076 (CQRCQGSLHEDVICTSRDC).

The protein belongs to the DNA polymerase type-B family. Component of the tetrameric DNA polymerase delta complex (Pol-delta4), which consists of POLD1/p125, POLD2/p50, POLD3/p66/p68 and POLD4/p12, with POLD1 bearing both DNA polymerase and 3' to 5' proofreading exonuclease activities. Within Pol-delta4, directly interacts with POLD2 and POLD4. Following genotoxic stress by DNA-damaging agents, such as ultraviolet light and methyl methanesulfonate, or by replication stress induced by treatment with hydroxyurea or aphidicolin, Pol-delta4 is converted into a trimeric form of the complex (Pol-delta3) by POLD4 degradation. Pol-delta3 is the major form at S phase replication sites and DNA damage sites. POLD1 displays different catalytic properties depending upon the complex it is found in. It exhibits higher proofreading activity and fidelity than Pol-delta4, making it particularly well suited to respond to DNA damage. Directly interacts with PCNA, as do POLD3 and POLD4; this interaction stimulates Pol-delta4 polymerase activity. As POLD2 and POLD4, directly interacts with WRNIP1; this interaction stimulates DNA polymerase delta-mediated DNA synthesis, independently of the presence of PCNA. This stimulation may be due predominantly to an increase of initiation frequency and also to increased processivity. Also observed as a dimeric complex with POLD2 (Pol-delta2 complex). Pol-delta2 is relatively insensitive to the PCNA stimulation (2-5-fold) compared to Pol-delta4 that is stimulated by over 50-fold. The DNA polymerase delta complex interacts with POLDIP2; this interaction is probably mediated through direct binding to POLD2. Interacts with CIAO1. Interacts with POLDIP2. Interacts with RFC1. [4Fe-4S] cluster serves as cofactor. As to expression, widely expressed, with high levels of expression in heart and lung.

The protein localises to the nucleus. The enzyme catalyses DNA(n) + a 2'-deoxyribonucleoside 5'-triphosphate = DNA(n+1) + diphosphate. With respect to regulation, regulated by alteration of quaternary structure. Exhibits burst rates of DNA synthesis are about 5 times faster in the presence of POLD4 (Pol-delta4 complex) than in its absence (Pol-delta3 complex), while the affinity of the enzyme for its DNA and dNTP substrates appears unchanged. The Pol-delta3 complex is more likely to proofread DNA synthesis because it cleaves single-stranded DNA twice as fast and transfers mismatched DNA from the polymerase to the exonuclease sites 9 times faster compared to the Pol-delta3 complex. Pol-delta3 also extends mismatched primers 3 times more slowly in the absence of POLD4. The conversion of Pol-delta4 into Pol-delta3 is induced by genotoxic stress or by replication stress leading POLD4 degradation. Stimulated in the presence of PCNA. This stimulation is further increased in the presence of KCTD13/PDIP1, most probably via direct interaction between KCTD13 and POLD2. As the catalytic component of the trimeric (Pol-delta3 complex) and tetrameric DNA polymerase delta complexes (Pol-delta4 complex), plays a crucial role in high fidelity genome replication, including in lagging strand synthesis, and repair. Exhibits both DNA polymerase and 3'- to 5'-exonuclease activities. Requires the presence of accessory proteins POLD2, POLD3 and POLD4 for full activity. Depending upon the absence (Pol-delta3) or the presence of POLD4 (Pol-delta4), displays differences in catalytic activity. Most notably, expresses higher proofreading activity in the context of Pol-delta3 compared with that of Pol-delta4. Although both Pol-delta3 and Pol-delta4 process Okazaki fragments in vitro, Pol-delta3 may be better suited to fulfill this task, exhibiting near-absence of strand displacement activity compared to Pol-delta4 and stalling on encounter with the 5'-blocking oligonucleotides. Pol-delta3 idling process may avoid the formation of a gap, while maintaining a nick that can be readily ligated. Along with DNA polymerase kappa, DNA polymerase delta carries out approximately half of nucleotide excision repair (NER) synthesis following UV irradiation. Under conditions of DNA replication stress, in the presence of POLD3 and POLD4, may catalyze the repair of broken replication forks through break-induced replication (BIR). Involved in the translesion synthesis (TLS) of templates carrying O6-methylguanine, 8oxoG or abasic sites. In Homo sapiens (Human), this protein is DNA polymerase delta catalytic subunit.